Consider the following 387-residue polypeptide: Alkanesulfonate monooxygenase (387 aa).

This sequence belongs to the SsuD family.

It catalyses the reaction an alkanesulfonate + FMNH2 + O2 = an aldehyde + FMN + sulfite + H2O + 2 H(+). In terms of biological role, catalyzes the desulfonation of aliphatic sulfonates. The chain is Alkanesulfonate monooxygenase from Ralstonia nicotianae (strain ATCC BAA-1114 / GMI1000) (Ralstonia solanacearum).